A 501-amino-acid chain; its full sequence is ATP synthase subunit alpha (501 aa).

Residue 169 to 176 (GDRQTGKT) participates in ATP binding.

Belongs to the ATPase alpha/beta chains family. In terms of assembly, F-type ATPases have 2 components, CF(1) - the catalytic core - and CF(0) - the membrane proton channel. CF(1) has five subunits: alpha(3), beta(3), gamma(1), delta(1), epsilon(1). CF(0) has three main subunits: a(1), b(2) and c(9-12). The alpha and beta chains form an alternating ring which encloses part of the gamma chain. CF(1) is attached to CF(0) by a central stalk formed by the gamma and epsilon chains, while a peripheral stalk is formed by the delta and b chains.

Its subcellular location is the cell membrane. The enzyme catalyses ATP + H2O + 4 H(+)(in) = ADP + phosphate + 5 H(+)(out). Produces ATP from ADP in the presence of a proton gradient across the membrane. The alpha chain is a regulatory subunit. This is ATP synthase subunit alpha from Streptococcus uberis (strain ATCC BAA-854 / 0140J).